Consider the following 263-residue polypeptide: Apolipoprotein A-I (263 aa).

Residues 1-18 form the signal peptide; the sequence is MKAVVLAVAVLFLTGSQA. 2 tandem repeats follow at residues 66 to 87 and 88 to 109. The segment at 66-263 is 10 X approximate tandem repeats; that stretch reads LKLLDNWDTL…DEVSKKLSAQ (198 aa). Met-108 bears the Methionine sulfoxide mark. The stretch at 110–120 is one 3; half-length repeat; sequence KDLVEVKEKVQ. Tandem repeats lie at residues 121 to 142, 143 to 164, 165 to 186, 187 to 206, and 207 to 228. The stretch at 229–239 is one 9; half-length repeat; that stretch reads PALEDLRLGLL. Residues 240–263 form repeat 10; the sequence is PVLESLKASFLSSIDEVSKKLSAQ.

This sequence belongs to the apolipoprotein A1/A4/E family. In terms of assembly, homodimer. Interacts with APOA1BP and CLU. Component of a sperm activating protein complex (SPAP), consisting of APOA1, an immunoglobulin heavy chain, an immunoglobulin light chain and albumin. Interacts with NDRG1. Interacts with SCGB3A2. Interacts with NAXE and YJEFN3. Post-translationally, glycosylated. In terms of processing, palmitoylated. Phosphorylation sites are present in the extracellular medium.

The protein localises to the secreted. Functionally, participates in the reverse transport of cholesterol from tissues to the liver for excretion by promoting cholesterol efflux from tissues and by acting as a cofactor for the lecithin cholesterol acyltransferase (LCAT). As part of the SPAP complex, activates spermatozoa motility. The polypeptide is Apolipoprotein A-I (APOA1) (Octodon degus (Degu)).